The chain runs to 193 residues: Imidazoleglycerol-phosphate dehydratase (193 aa).

The protein belongs to the imidazoleglycerol-phosphate dehydratase family.

Its subcellular location is the cytoplasm. It catalyses the reaction D-erythro-1-(imidazol-4-yl)glycerol 3-phosphate = 3-(imidazol-4-yl)-2-oxopropyl phosphate + H2O. It functions in the pathway amino-acid biosynthesis; L-histidine biosynthesis; L-histidine from 5-phospho-alpha-D-ribose 1-diphosphate: step 6/9. The protein is Imidazoleglycerol-phosphate dehydratase of Saccharolobus islandicus (strain Y.G.57.14 / Yellowstone #1) (Sulfolobus islandicus).